The primary structure comprises 251 residues: DNA repair protein RecO (251 aa).

This sequence belongs to the RecO family.

Functionally, involved in DNA repair and RecF pathway recombination. The protein is DNA repair protein RecO of Albidiferax ferrireducens (strain ATCC BAA-621 / DSM 15236 / T118) (Rhodoferax ferrireducens).